A 497-amino-acid polypeptide reads, in one-letter code: Acetyl-coenzyme A carboxylase carboxyl transferase subunit beta, chloroplastic (497 aa).

The region spanning leucine 230 to lysine 497 is the CoA carboxyltransferase N-terminal domain. The Zn(2+) site is built by cysteine 234, cysteine 237, cysteine 253, and cysteine 256. Residues cysteine 234 to cysteine 256 form a C4-type zinc finger.

It belongs to the AccD/PCCB family. As to quaternary structure, acetyl-CoA carboxylase is a heterohexamer composed of biotin carboxyl carrier protein, biotin carboxylase and 2 subunits each of ACCase subunit alpha and ACCase plastid-coded subunit beta (accD). Zn(2+) serves as cofactor.

It localises to the plastid. The protein resides in the chloroplast stroma. The enzyme catalyses N(6)-carboxybiotinyl-L-lysyl-[protein] + acetyl-CoA = N(6)-biotinyl-L-lysyl-[protein] + malonyl-CoA. It functions in the pathway lipid metabolism; malonyl-CoA biosynthesis; malonyl-CoA from acetyl-CoA: step 1/1. In terms of biological role, component of the acetyl coenzyme A carboxylase (ACC) complex. Biotin carboxylase (BC) catalyzes the carboxylation of biotin on its carrier protein (BCCP) and then the CO(2) group is transferred by the transcarboxylase to acetyl-CoA to form malonyl-CoA. The protein is Acetyl-coenzyme A carboxylase carboxyl transferase subunit beta, chloroplastic of Platanus occidentalis (Sycamore).